The primary structure comprises 340 residues: UDP-3-O-acylglucosamine N-acyltransferase (340 aa).

The Proton acceptor role is filled by His-237.

This sequence belongs to the transferase hexapeptide repeat family. LpxD subfamily. As to quaternary structure, homotrimer.

It carries out the reaction a UDP-3-O-[(3R)-3-hydroxyacyl]-alpha-D-glucosamine + a (3R)-hydroxyacyl-[ACP] = a UDP-2-N,3-O-bis[(3R)-3-hydroxyacyl]-alpha-D-glucosamine + holo-[ACP] + H(+). It functions in the pathway bacterial outer membrane biogenesis; LPS lipid A biosynthesis. In terms of biological role, catalyzes the N-acylation of UDP-3-O-acylglucosamine using 3-hydroxyacyl-ACP as the acyl donor. Is involved in the biosynthesis of lipid A, a phosphorylated glycolipid that anchors the lipopolysaccharide to the outer membrane of the cell. The chain is UDP-3-O-acylglucosamine N-acyltransferase from Desulfosudis oleivorans (strain DSM 6200 / JCM 39069 / Hxd3) (Desulfococcus oleovorans).